Reading from the N-terminus, the 207-residue chain is Urease accessory protein UreG (207 aa).

Residue 12–19 participates in GTP binding; that stretch reads GPVGAGKT.

The protein belongs to the SIMIBI class G3E GTPase family. UreG subfamily. Homodimer. UreD, UreF and UreG form a complex that acts as a GTP-hydrolysis-dependent molecular chaperone, activating the urease apoprotein by helping to assemble the nickel containing metallocenter of UreC. The UreE protein probably delivers the nickel.

The protein localises to the cytoplasm. Its function is as follows. Facilitates the functional incorporation of the urease nickel metallocenter. This process requires GTP hydrolysis, probably effectuated by UreG. This chain is Urease accessory protein UreG, found in Cereibacter sphaeroides (strain ATCC 17023 / DSM 158 / JCM 6121 / CCUG 31486 / LMG 2827 / NBRC 12203 / NCIMB 8253 / ATH 2.4.1.) (Rhodobacter sphaeroides).